A 494-amino-acid polypeptide reads, in one-letter code: Aspartyl/glutamyl-tRNA(Asn/Gln) amidotransferase subunit B (494 aa).

This sequence belongs to the GatB/GatE family. GatB subfamily. As to quaternary structure, heterotrimer of A, B and C subunits.

It catalyses the reaction L-glutamyl-tRNA(Gln) + L-glutamine + ATP + H2O = L-glutaminyl-tRNA(Gln) + L-glutamate + ADP + phosphate + H(+). The enzyme catalyses L-aspartyl-tRNA(Asn) + L-glutamine + ATP + H2O = L-asparaginyl-tRNA(Asn) + L-glutamate + ADP + phosphate + 2 H(+). Allows the formation of correctly charged Asn-tRNA(Asn) or Gln-tRNA(Gln) through the transamidation of misacylated Asp-tRNA(Asn) or Glu-tRNA(Gln) in organisms which lack either or both of asparaginyl-tRNA or glutaminyl-tRNA synthetases. The reaction takes place in the presence of glutamine and ATP through an activated phospho-Asp-tRNA(Asn) or phospho-Glu-tRNA(Gln). This is Aspartyl/glutamyl-tRNA(Asn/Gln) amidotransferase subunit B from Synechococcus sp. (strain CC9605).